Here is a 313-residue protein sequence, read N- to C-terminus: 3'-5' exoribonuclease YhaM (313 aa).

Positions 22–90 (SSVKGTASNG…QLKIRQIRQA (69 aa)) form a DNA-binding region, OB. In terms of domain architecture, HD spans 163 to 279 (HVVSMLRLAK…LHQIDLMDAS (117 aa)).

This sequence belongs to the YhaM family.

Shows a 3'-5' exoribonuclease activity. In Listeria monocytogenes serovar 1/2a (strain ATCC BAA-679 / EGD-e), this protein is 3'-5' exoribonuclease YhaM.